A 735-amino-acid polypeptide reads, in one-letter code: Transmembrane channel-like protein 7 (735 aa).

Topologically, residues 1 to 164 (MSEFGAGAEL…QSYFSFLRFL (164 aa)) are extracellular. The helical transmembrane segment at 165–185 (VLLNFLMFILMFSFVTLPAVI) threads the bilayer. Over 186–233 (SNYGIFNSSSTKISPNNTEPYCTVYTPSGNKGLVYFYTYLKDLLTGTG) the chain is Cytoplasmic. The helical transmembrane segment at 234–254 (FLEVTVLFYGYYTIDAAWFSV) threads the bilayer. At 255-258 (LRYN) the chain is on the extracellular side. A helical membrane pass occupies residues 259 to 279 (LPLAYLLTTFAYLALSFVWII). At 280–355 (KRSVERFRQH…TMKEKLQIYS (76 aa)) the chain is on the cytoplasmic side. Residues 356–376 (LRIFINIIVIAVLSGCFYSIY) traverse the membrane as a helical segment. Residues 377 to 403 (RATVFSQENSSVSIRRNVMIANLLVQY) are Extracellular-facing. An N-linked (GlcNAc...) asparagine glycan is attached at Asn-385. A helical membrane pass occupies residues 404 to 424 (LPSIVITSANFIAPQIFSFLI). Over 425–436 (RFEDYSAAFEIR) the chain is Cytoplasmic. The helical transmembrane segment at 437–457 (LTLIRCVFVRLANVGVLLFSL) threads the bilayer. The Extracellular segment spans residues 458 to 488 (WSQIHCDNDQCKACGYDYELYPCWESAVGQE). A helical transmembrane segment spans residues 489 to 509 (MYKLLIFDFMIIIAMTLFVDF). Residues 510–548 (PRKLLVTYCSWKLVQWWGLQEFGISDNVLEIIYGQTICW) lie on the Cytoplasmic side of the membrane. The helical transmembrane segment at 549 to 569 (IGTFFSPLLPAIATIKYFIIF) threads the bilayer. Residues 570–594 (YIKKISLIHTRKPASRPIRASSSNF) lie on the Extracellular side of the membrane. The chain crosses the membrane as a helical span at residues 595–615 (FFLAVLLIGLILAFVPLGVSI). At 616 to 634 (ALISSSKACGPFRNFNTSW) the chain is on the cytoplasmic side. The helical transmembrane segment at 635 to 655 (AIVPYTILEFPIGLQKFLYGI) threads the bilayer. Residues 656–658 (ASE) are Extracellular-facing. A helical membrane pass occupies residues 659–679 (AFAVPFFVIACLFMFYFIALA). Topologically, residues 680 to 735 (GAHKRVVEQLREQLVTESRDKLFLLEKLSEAQKNSGKPQKARKLTSSWLLEPLDKG) are cytoplasmic. Residues 710–735 (AQKNSGKPQKARKLTSSWLLEPLDKG) are disordered.

The protein belongs to the TMC family.

It is found in the membrane. Functionally, probable component of an ion channel. In Gallus gallus (Chicken), this protein is Transmembrane channel-like protein 7 (Tmc7).